The chain runs to 145 residues: MSSKAARRRAREFALQGIYQWLLSANSMLLIEEHVSQVSGFDKADRELFISLLRGTLNNVDDLQAEFAPFIHRAVHELSPVERAILLLATHELKHNLDTPYRVIINEAIELAKSYGGTDGHRFVNGVLDKLATQLRVTEVSAGRS.

It belongs to the NusB family.

Its function is as follows. Involved in transcription antitermination. Required for transcription of ribosomal RNA (rRNA) genes. Binds specifically to the boxA antiterminator sequence of the ribosomal RNA (rrn) operons. The polypeptide is Transcription antitermination protein NusB (Aromatoleum aromaticum (strain DSM 19018 / LMG 30748 / EbN1) (Azoarcus sp. (strain EbN1))).